Reading from the N-terminus, the 255-residue chain is Triosephosphate isomerase (255 aa).

Residue 9–11 (NWK) participates in substrate binding. The active-site Electrophile is the His95. The active-site Proton acceptor is Glu167. Substrate-binding positions include Gly173, Ser212, and 233–234 (GG).

The protein belongs to the triosephosphate isomerase family. In terms of assembly, homodimer.

The protein resides in the cytoplasm. It catalyses the reaction D-glyceraldehyde 3-phosphate = dihydroxyacetone phosphate. The protein operates within carbohydrate biosynthesis; gluconeogenesis. It functions in the pathway carbohydrate degradation; glycolysis; D-glyceraldehyde 3-phosphate from glycerone phosphate: step 1/1. In terms of biological role, involved in the gluconeogenesis. Catalyzes stereospecifically the conversion of dihydroxyacetone phosphate (DHAP) to D-glyceraldehyde-3-phosphate (G3P). The protein is Triosephosphate isomerase of Erwinia tasmaniensis (strain DSM 17950 / CFBP 7177 / CIP 109463 / NCPPB 4357 / Et1/99).